The sequence spans 147 residues: MFDFGFSELIVIAVVTLIVVGPERLPKVARTAGHLLGRLQRYVSDVKSDIKREMQLEELKALQQQVEQQARELESSMRGEAAKIEADVNKTVAEVKSGVTVDAAPVPLTHAVEAPAAPAPMSLAPHGDAASAGREPAAVPGSGPEKA.

Residues 1-21 form a helical membrane-spanning segment; sequence MFDFGFSELIVIAVVTLIVVG. A disordered region spans residues 117-147; sequence APAPMSLAPHGDAASAGREPAAVPGSGPEKA.

Belongs to the TatB family. As to quaternary structure, the Tat system comprises two distinct complexes: a TatABC complex, containing multiple copies of TatA, TatB and TatC subunits, and a separate TatA complex, containing only TatA subunits. Substrates initially bind to the TatABC complex, which probably triggers association of the separate TatA complex to form the active translocon.

Its subcellular location is the cell inner membrane. Functionally, part of the twin-arginine translocation (Tat) system that transports large folded proteins containing a characteristic twin-arginine motif in their signal peptide across membranes. Together with TatC, TatB is part of a receptor directly interacting with Tat signal peptides. TatB may form an oligomeric binding site that transiently accommodates folded Tat precursor proteins before their translocation. The polypeptide is Sec-independent protein translocase protein TatB (Aromatoleum aromaticum (strain DSM 19018 / LMG 30748 / EbN1) (Azoarcus sp. (strain EbN1))).